Here is a 503-residue protein sequence, read N- to C-terminus: Hexose transporter 1 (503 aa).

Over 1–26 (MKKSSKEISPSQSLKNGGSDHFFNTS) the chain is Cytoplasmic. Residues 27 to 47 (LMYVLAACLASFIFGYQVSVL) traverse the membrane as a helical segment. At 48-76 (NTIKNFIVIEFGWCTGNKVECDDSTLKSS) the chain is on the extracellular side. The cysteines at positions 61 and 68 are disulfide-linked. A helical membrane pass occupies residues 77 to 97 (FLLASVFIGAVVGSGFSDYLV). Residues 98–102 (QHGRR) are Cytoplasmic-facing. A helical transmembrane segment spans residues 103-123 (FSLLVIYNFFILVSILTSITH). Over 124 to 132 (HFHTILFSR) the chain is Extracellular. Residues 133-153 (LLSGFGVGLITVSVPMYISEM) traverse the membrane as a helical segment. The Cytoplasmic segment spans residues 154–163 (THKDKKGAYG). Residues 164–184 (VLHQLFITFGILVAVLLGMAM) traverse the membrane as a helical segment. Gln167 is a binding site for alpha-D-glucose. Gln167 lines the beta-D-glucose pocket. Residues 185-205 (GEAPDAKSVDALGEFQKIWWR) lie on the Extracellular side of the membrane. A helical membrane pass occupies residues 206-226 (LMFFFPCLISILGIVLLTFFY). Over 227–291 (KEETPYYLFE…RAMQIPSYRN (65 aa)) the chain is Cytoplasmic. The helical transmembrane segment at 292–312 (VILLGCILSGLQQFTGINVLV) threads the bilayer. Gln303, Gln304, and Asn309 together coordinate alpha-D-glucose. A beta-D-glucose-binding site is contributed by Gln303. Position 309 (Asn309) interacts with beta-D-glucose. At 313 to 329 (SNSNELYKEFLSNKLIT) the chain is on the extracellular side. A helical membrane pass occupies residues 330 to 350 (TLSVIMTVVNFLMTFPAIYIV). Asn339 contacts beta-D-glucose. Residues 351 to 356 (EKLGRK) lie on the Cytoplasmic side of the membrane. The chain crosses the membrane as a helical span at residues 357–377 (TLLLCGCAGVTLAAFLPTAIA). The Extracellular portion of the chain corresponds to 378–391 (NQIDRSSDLVRNLS). A helical transmembrane segment spans residues 392–412 (IAATFVMIISFAVSYGPVLWI). Trp411 lines the alpha-D-glucose pocket. Residues 413-428 (YLHEMFPSEIKDSAAS) lie on the Cytoplasmic side of the membrane. The chain crosses the membrane as a helical span at residues 429–449 (LASLVNWVCAIIVVFPSDIII). At 450–454 (KKSPT) the chain is on the extracellular side. Residues 455–475 (ILFFIFSGMSILSFLFIFFFI) traverse the membrane as a helical segment. Residues 476–503 (KETKGGEIGTSPYITMEERQKHMGKSAV) lie on the Cytoplasmic side of the membrane.

This sequence belongs to the major facilitator superfamily. Sugar transporter (TC 2.A.1.1) family. Homodimer.

Its subcellular location is the cell membrane. It carries out the reaction D-glucose(out) = D-glucose(in). It catalyses the reaction D-fructose(out) = D-fructose(in). The catalysed reaction is D-galactose(in) = D-galactose(out). The enzyme catalyses D-mannose(out) = D-mannose(in). It carries out the reaction D-glucosamine(out) = D-glucosamine(in). It catalyses the reaction D-xylose(out) = D-xylose(in). With respect to regulation, inhibited by compound 3361 (3-O-((undec-10-en)-1-yl)-D-glucose). Its function is as follows. Sodium-independent facilitative hexose transporter. Can transport D-glucose and D-fructose. Can transport D-mannose, D-galactose, D-xylose and D-glucosamine. The polypeptide is Hexose transporter 1 (Plasmodium vivax).